The following is a 135-amino-acid chain: Small ribosomal subunit protein uS9 (135 aa).

The protein belongs to the universal ribosomal protein uS9 family.

The chain is Small ribosomal subunit protein uS9 (rps9) from Archaeoglobus fulgidus (strain ATCC 49558 / DSM 4304 / JCM 9628 / NBRC 100126 / VC-16).